Reading from the N-terminus, the 455-residue chain is Argininosuccinate lyase (455 aa).

It belongs to the lyase 1 family. Argininosuccinate lyase subfamily.

The protein localises to the cytoplasm. The catalysed reaction is 2-(N(omega)-L-arginino)succinate = fumarate + L-arginine. The protein operates within amino-acid biosynthesis; L-arginine biosynthesis; L-arginine from L-ornithine and carbamoyl phosphate: step 3/3. This chain is Argininosuccinate lyase, found in Shewanella baltica (strain OS185).